Consider the following 509-residue polypeptide: Photosystem II CP47 reaction center protein (509 aa).

The next 6 membrane-spanning stretches (helical) occupy residues S21–S36, I101–W115, G140–F156, I203–T218, V237–V252, and V457–R472.

The protein belongs to the PsbB/PsbC family. PsbB subfamily. As to quaternary structure, PSII is composed of 1 copy each of membrane proteins PsbA, PsbB, PsbC, PsbD, PsbE, PsbF, PsbH, PsbI, PsbJ, PsbK, PsbL, PsbM, PsbT, PsbX, PsbY, PsbZ, Psb30/Ycf12, peripheral proteins PsbO, CyanoQ (PsbQ), PsbU, PsbV and a large number of cofactors. It forms dimeric complexes. It depends on Binds multiple chlorophylls. PSII binds additional chlorophylls, carotenoids and specific lipids. as a cofactor.

It is found in the cellular thylakoid membrane. One of the components of the core complex of photosystem II (PSII). It binds chlorophyll and helps catalyze the primary light-induced photochemical processes of PSII. PSII is a light-driven water:plastoquinone oxidoreductase, using light energy to abstract electrons from H(2)O, generating O(2) and a proton gradient subsequently used for ATP formation. This is Photosystem II CP47 reaction center protein from Nostoc sp. (strain PCC 7120 / SAG 25.82 / UTEX 2576).